Reading from the N-terminus, the 857-residue chain is Dynein regulatory complex protein 11 (857 aa).

The IQ domain occupies 206-235 (TKLAALQIQKVWRGFHQCKKTVKEREEEMV). The segment at 348 to 388 (EEKLKKKKKKEDKENKGKKGKKEKKEKKEKKVSLKEKAMKD) is disordered. A compositionally biased stretch (basic residues) spans 365 to 375 (KKGKKEKKEKK). A compositionally biased stretch (basic and acidic residues) spans 376-387 (EKKVSLKEKAMK). 598 to 605 (GPSGVGKK) lines the ATP pocket. The disordered stretch occupies residues 834-857 (SLTVGNKEKEKDKGKKGKRGKKKK). The span at 847 to 857 (GKKGKRGKKKK) shows a compositional bias: basic residues.

Belongs to the AAA ATPase family. DRC11 subfamily. In terms of assembly, component of the nexin-dynein regulatory complex (N-DRC).

The protein localises to the cytoplasm. Its subcellular location is the cytoskeleton. It localises to the flagellum axoneme. Functionally, component of the nexin-dynein regulatory complex (N-DRC), a key regulator of ciliary/flagellar motility which maintains the alignment and integrity of the distal axoneme and regulates microtubule sliding in motile axonemes. In Mus musculus (Mouse), this protein is Dynein regulatory complex protein 11 (Iqca1).